A 302-amino-acid chain; its full sequence is MYYGFDVGGTKIEFGAFNEKLERVATERIPTQTEDYSLLVNDIASLIAKYDAEFGVEGKVGLGIPGMEDAETGALLTSNVPAAKGQFLRKDLEAKIGRSVKIDNDANCFALSEAWDEELKDSPSVLGLILGTGFGGGLVFDGKVFSGYSHVAGELGHSRLPIDAWFHLGEKAPLLECGCGNKGCIDNYLSGRGFELLYAHYYGQEKKAIDIIKANEAGDADAVEHVDRFMELLAICFANLFTCFDPHVVALGGGLSNFALIYDELPKRLPKHLLSVARVPRIIKAKHGDSGGVRGAAFLNIK.

ATP contacts are provided by residues 4–11 (GFDVGGTK) and 133–140 (GFGGGLVF). 4 residues coordinate Zn(2+): His-157, Cys-177, Cys-179, and Cys-184.

This sequence belongs to the ROK (NagC/XylR) family. NagK subfamily.

The catalysed reaction is N-acetyl-D-glucosamine + ATP = N-acetyl-D-glucosamine 6-phosphate + ADP + H(+). The protein operates within cell wall biogenesis; peptidoglycan recycling. In terms of biological role, catalyzes the phosphorylation of N-acetyl-D-glucosamine (GlcNAc) derived from cell-wall degradation, yielding GlcNAc-6-P. The polypeptide is N-acetyl-D-glucosamine kinase (Aliivibrio salmonicida (strain LFI1238) (Vibrio salmonicida (strain LFI1238))).